Here is a 358-residue protein sequence, read N- to C-terminus: S-adenosylmethionine:tRNA ribosyltransferase-isomerase (358 aa).

The protein belongs to the QueA family. In terms of assembly, monomer.

The protein localises to the cytoplasm. It carries out the reaction 7-aminomethyl-7-carbaguanosine(34) in tRNA + S-adenosyl-L-methionine = epoxyqueuosine(34) in tRNA + adenine + L-methionine + 2 H(+). It functions in the pathway tRNA modification; tRNA-queuosine biosynthesis. Transfers and isomerizes the ribose moiety from AdoMet to the 7-aminomethyl group of 7-deazaguanine (preQ1-tRNA) to give epoxyqueuosine (oQ-tRNA). The chain is S-adenosylmethionine:tRNA ribosyltransferase-isomerase from Rhodopseudomonas palustris (strain BisA53).